The primary structure comprises 315 residues: Protein-L-isoaspartate O-methyltransferase (315 aa).

Disordered stretches follow at residues 1–47 (MSGE…KPAA) and 59–89 (RALP…AAPK). Basic and acidic residues predominate over residues 14 to 34 (EDLKRAPRKSEVRSGSGERHA). 2 stretches are compositionally biased toward low complexity: residues 35 to 47 (ASAV…KPAA) and 59 to 81 (RALP…LKPA). Ser-162 is an active-site residue.

Belongs to the methyltransferase superfamily. L-isoaspartyl/D-aspartyl protein methyltransferase family.

The protein resides in the cytoplasm. The catalysed reaction is [protein]-L-isoaspartate + S-adenosyl-L-methionine = [protein]-L-isoaspartate alpha-methyl ester + S-adenosyl-L-homocysteine. Its function is as follows. Catalyzes the methyl esterification of L-isoaspartyl residues in peptides and proteins that result from spontaneous decomposition of normal L-aspartyl and L-asparaginyl residues. It plays a role in the repair and/or degradation of damaged proteins. This is Protein-L-isoaspartate O-methyltransferase from Burkholderia ambifaria (strain MC40-6).